The primary structure comprises 249 residues: Probable transcriptional regulatory protein Minf_0651 (249 aa).

It belongs to the TACO1 family.

Its subcellular location is the cytoplasm. This Methylacidiphilum infernorum (isolate V4) (Methylokorus infernorum (strain V4)) protein is Probable transcriptional regulatory protein Minf_0651.